A 134-amino-acid chain; its full sequence is Biopolymer transport protein exbD2 (134 aa).

Topologically, residues 1-17 are cytoplasmic; sequence MRLGRRTSKQEEAQIDL. A helical transmembrane segment spans residues 18–38; that stretch reads TSMLDIVFIMLIFFIVTSSFV. Residues 39 to 134 are Periplasmic-facing; that stretch reads RESGVEVNRP…KSIALAAEKP (96 aa).

The protein belongs to the ExbD/TolR family. In terms of assembly, the accessory proteins ExbB and ExbD seem to form a complex with TonB.

The protein localises to the cell inner membrane. In terms of biological role, involved in the TonB-dependent energy-dependent transport of various receptor-bound substrates. The sequence is that of Biopolymer transport protein exbD2 (exbD2) from Vibrio cholerae serotype O1 (strain ATCC 39315 / El Tor Inaba N16961).